Reading from the N-terminus, the 361-residue chain is Peptide chain release factor 1 (361 aa).

Gln-235 is subject to N5-methylglutamine.

It belongs to the prokaryotic/mitochondrial release factor family. Post-translationally, methylated by PrmC. Methylation increases the termination efficiency of RF1.

It localises to the cytoplasm. Peptide chain release factor 1 directs the termination of translation in response to the peptide chain termination codons UAG and UAA. The polypeptide is Peptide chain release factor 1 (Xanthomonas campestris pv. campestris (strain 8004)).